Here is a 252-residue protein sequence, read N- to C-terminus: Protein IL-40 (252 aa).

Positions 1–18 (MALLQLLLFAMLAACGFS) are cleaved as a signal peptide. 2 N-linked (GlcNAc...) asparagine glycosylation sites follow: asparagine 82 and asparagine 177.

Expressed in bone marrow, spleen and lymph node.

Its subcellular location is the secreted. Probable B cell-associated cytokine that plays a role in the regulation of humoral immune responses. Involved in lymphocyte B cell development and immunoglobulin/IgA production. The protein is Protein IL-40 of Mus musculus (Mouse).